A 327-amino-acid chain; its full sequence is BarH-like 1 homeobox protein (327 aa).

Disordered stretches follow at residues 1–90 (MEGS…AQSR), 112–184 (APYS…ARTA), and 305–327 (GASE…AQPR). Positions 33-54 (RSPLELSPRSESSSDCSSPASP) are enriched in low complexity. Polar residues predominate over residues 79-90 (QPGQLSAPAQSR). Composition is skewed to basic and acidic residues over residues 133–143 (AAEDFRDKLDK) and 152–166 (SEYK…EISS). The homeobox DNA-binding region spans 178 to 237 (PRKARTAFTDHQLAQLERSFERQKYLSVQDRMELAASLNLTDTQVKTWYQNRRTKWKRQT). Residues 316–327 (LAGVLPRAAQPR) show a composition bias toward low complexity.

Belongs to the BAR homeobox family.

The protein localises to the nucleus. The sequence is that of BarH-like 1 homeobox protein (BARHL1) from Homo sapiens (Human).